A 402-amino-acid polypeptide reads, in one-letter code: N-acetyltransferase Eis (402 aa).

The region spanning 3-154 is the N-acetyltransferase domain; it reads VTLCSPTEDD…RFARFHADAP (152 aa). Acetyl-CoA-binding positions include 85–87, 93–98, and 121–122; these read VAV, RRGLLR, and SE. Catalysis depends on Tyr126, which acts as the Proton donor. Residue Phe402 is the Proton acceptor; via carboxylate of the active site.

It belongs to the acetyltransferase Eis family. Homohexamer; trimer of dimers.

Its subcellular location is the secreted. It localises to the host cytoplasmic vesicle. It is found in the host phagosome. The protein resides in the extracellular vesicle. The protein localises to the bacterial extracellular vesicle. Its subcellular location is the host extracellular space. The enzyme catalyses L-lysyl-[protein] + acetyl-CoA = N(6)-acetyl-L-lysyl-[protein] + CoA + H(+). In terms of biological role, effector that is released into the host cell and affects host immune responses. Acts as an acetyltransferase that acetylates lysine residues of host proteins. In Mycobacterium bovis (strain ATCC BAA-935 / AF2122/97), this protein is N-acetyltransferase Eis.